The chain runs to 621 residues: Threonine--tRNA ligase (621 aa).

The tract at residues 1-137 (MRILQLHCDS…ESSKVVTKDS (137 aa)) is editing domain. Residues 128-150 (ESSKVVTKDSTTKDDDEDTSDAL) form a disordered region. The segment at 202 to 501 (PHVALMKKLA…SKKGKKPQLP (300 aa)) is catalytic. Zn(2+) contacts are provided by Cys-294, His-346, and His-470. Over residues 598–612 (QTSGKPYTGLNQSQH) the composition is skewed to polar residues. The disordered stretch occupies residues 598-621 (QTSGKPYTGLNQSQHLSKRPQLMV).

This sequence belongs to the class-II aminoacyl-tRNA synthetase family. Homodimer. Requires Zn(2+) as cofactor.

Its subcellular location is the cytoplasm. The enzyme catalyses tRNA(Thr) + L-threonine + ATP = L-threonyl-tRNA(Thr) + AMP + diphosphate + H(+). In terms of biological role, catalyzes the attachment of threonine to tRNA(Thr) in a two-step reaction: L-threonine is first activated by ATP to form Thr-AMP and then transferred to the acceptor end of tRNA(Thr). Also edits incorrectly charged L-seryl-tRNA(Thr). The protein is Threonine--tRNA ligase of Nitrosopumilus maritimus (strain SCM1).